The following is a 419-amino-acid chain: UDP-N-acetylglucosamine 1-carboxyvinyltransferase (419 aa).

22–23 contacts phosphoenolpyruvate; it reads KN. Arg-92 is a UDP-N-acetyl-alpha-D-glucosamine binding site. The active-site Proton donor is the Cys-116. At Cys-116 the chain carries 2-(S-cysteinyl)pyruvic acid O-phosphothioketal. UDP-N-acetyl-alpha-D-glucosamine is bound by residues 121 to 125, Asp-306, and Ile-328; that span reads RPIDL.

Belongs to the EPSP synthase family. MurA subfamily.

The protein localises to the cytoplasm. The catalysed reaction is phosphoenolpyruvate + UDP-N-acetyl-alpha-D-glucosamine = UDP-N-acetyl-3-O-(1-carboxyvinyl)-alpha-D-glucosamine + phosphate. The protein operates within cell wall biogenesis; peptidoglycan biosynthesis. Functionally, cell wall formation. Adds enolpyruvyl to UDP-N-acetylglucosamine. Target for the antibiotic fosfomycin. The sequence is that of UDP-N-acetylglucosamine 1-carboxyvinyltransferase from Streptococcus pneumoniae (strain Hungary19A-6).